Consider the following 472-residue polypeptide: Protein nucleotidyltransferase YdiU (472 aa).

Residues Gly86, Gly88, Arg89, Lys109, Asp121, Gly122, Arg172, and Arg179 each coordinate ATP. Residue Asp244 is the Proton acceptor of the active site. Residues Asn245 and Asp254 each contribute to the Mg(2+) site. Residue Asp254 coordinates ATP.

It belongs to the SELO family. Mg(2+) is required as a cofactor. The cofactor is Mn(2+).

The catalysed reaction is L-seryl-[protein] + ATP = 3-O-(5'-adenylyl)-L-seryl-[protein] + diphosphate. It carries out the reaction L-threonyl-[protein] + ATP = 3-O-(5'-adenylyl)-L-threonyl-[protein] + diphosphate. It catalyses the reaction L-tyrosyl-[protein] + ATP = O-(5'-adenylyl)-L-tyrosyl-[protein] + diphosphate. The enzyme catalyses L-histidyl-[protein] + UTP = N(tele)-(5'-uridylyl)-L-histidyl-[protein] + diphosphate. The catalysed reaction is L-seryl-[protein] + UTP = O-(5'-uridylyl)-L-seryl-[protein] + diphosphate. It carries out the reaction L-tyrosyl-[protein] + UTP = O-(5'-uridylyl)-L-tyrosyl-[protein] + diphosphate. Functionally, nucleotidyltransferase involved in the post-translational modification of proteins. It can catalyze the addition of adenosine monophosphate (AMP) or uridine monophosphate (UMP) to a protein, resulting in modifications known as AMPylation and UMPylation. The chain is Protein nucleotidyltransferase YdiU from Ruegeria sp. (strain TM1040) (Silicibacter sp.).